The sequence spans 494 residues: Probable cytosol aminopeptidase (494 aa).

2 residues coordinate Mn(2+): lysine 260 and aspartate 265. The active site involves lysine 272. Residues aspartate 283, aspartate 342, and glutamate 344 each coordinate Mn(2+). Residue arginine 346 is part of the active site.

The protein belongs to the peptidase M17 family. Mn(2+) is required as a cofactor.

The protein localises to the cytoplasm. The enzyme catalyses Release of an N-terminal amino acid, Xaa-|-Yaa-, in which Xaa is preferably Leu, but may be other amino acids including Pro although not Arg or Lys, and Yaa may be Pro. Amino acid amides and methyl esters are also readily hydrolyzed, but rates on arylamides are exceedingly low.. It catalyses the reaction Release of an N-terminal amino acid, preferentially leucine, but not glutamic or aspartic acids.. Its function is as follows. Presumably involved in the processing and regular turnover of intracellular proteins. Catalyzes the removal of unsubstituted N-terminal amino acids from various peptides. This chain is Probable cytosol aminopeptidase, found in Bacillus cereus (strain Q1).